We begin with the raw amino-acid sequence, 100 residues long: uncharacterized protein (100 aa).

This is an uncharacterized protein from Bacillus anthracis.